Here is a 462-residue protein sequence, read N- to C-terminus: tRNA pseudouridine(32) synthase, mitochondrial (462 aa).

The N-terminal 24 residues, 1–24, are a transit peptide targeting the mitochondrion; sequence MQRNNRLRNLFTVPVIMARQLKRN. One can recognise an S4 RNA-binding domain in the interval 127–188; the sequence is KLVDVFISEF…HEPPVTSRPI (62 aa). Asp-238 is an active-site residue.

This sequence belongs to the pseudouridine synthase RluA family.

Its subcellular location is the mitochondrion. The catalysed reaction is uridine(32) in tRNA = pseudouridine(32) in tRNA. Its function is as follows. Responsible for synthesis of pseudouridine from uracil-32 in mitochondrial transfer RNAs. This Saccharomyces cerevisiae (strain ATCC 204508 / S288c) (Baker's yeast) protein is tRNA pseudouridine(32) synthase, mitochondrial (PUS9).